Consider the following 256-residue polypeptide: 5'-nucleotidase SurE (256 aa).

Residues Asp-8, Asp-9, Ser-39, and Asn-91 each coordinate a divalent metal cation.

The protein belongs to the SurE nucleotidase family. A divalent metal cation serves as cofactor.

It is found in the cytoplasm. The catalysed reaction is a ribonucleoside 5'-phosphate + H2O = a ribonucleoside + phosphate. In terms of biological role, nucleotidase that shows phosphatase activity on nucleoside 5'-monophosphates. The protein is 5'-nucleotidase SurE of Marinobacter nauticus (strain ATCC 700491 / DSM 11845 / VT8) (Marinobacter aquaeolei).